A 233-amino-acid chain; its full sequence is Enolase-phosphatase E1 (233 aa).

Mg(2+)-binding residues include aspartate 6 and glutamate 8. Substrate contacts are provided by residues 128–129 (SS) and lysine 163. Residue aspartate 188 coordinates Mg(2+).

This sequence belongs to the HAD-like hydrolase superfamily. MasA/MtnC family. In terms of assembly, monomer. Mg(2+) is required as a cofactor.

The protein resides in the cytoplasm. Its subcellular location is the nucleus. The enzyme catalyses 5-methylsulfanyl-2,3-dioxopentyl phosphate + H2O = 1,2-dihydroxy-5-(methylsulfanyl)pent-1-en-3-one + phosphate. It functions in the pathway amino-acid biosynthesis; L-methionine biosynthesis via salvage pathway; L-methionine from S-methyl-5-thio-alpha-D-ribose 1-phosphate: step 3/6. The protein operates within amino-acid biosynthesis; L-methionine biosynthesis via salvage pathway; L-methionine from S-methyl-5-thio-alpha-D-ribose 1-phosphate: step 4/6. In terms of biological role, bifunctional enzyme that catalyzes the enolization of 2,3-diketo-5-methylthiopentyl-1-phosphate (DK-MTP-1-P) into the intermediate 2-hydroxy-3-keto-5-methylthiopentenyl-1-phosphate (HK-MTPenyl-1-P), which is then dephosphorylated to form the acireductone 1,2-dihydroxy-3-keto-5-methylthiopentene (DHK-MTPene). The chain is Enolase-phosphatase E1 from Yarrowia lipolytica (strain CLIB 122 / E 150) (Yeast).